The chain runs to 118 residues: uncharacterized protein (118 aa).

3 helical membrane passes run 6–26 (ILIL…PFMV), 43–63 (ALSC…IHVL), and 84–104 (IFKV…VLVQ).

It belongs to the AzlD/HI_1737/HP1330 family.

Its subcellular location is the cell membrane. This is an uncharacterized protein from Helicobacter pylori (strain J99 / ATCC 700824) (Campylobacter pylori J99).